Reading from the N-terminus, the 439-residue chain is Glucose-6-phosphate 1-dehydrogenase (439 aa).

Lysine 100 provides a ligand contact to NADP(+). 4 residues coordinate substrate: histidine 130, lysine 134, glutamate 168, and aspartate 187. The active-site Proton acceptor is histidine 192. Substrate is bound at residue lysine 288.

This sequence belongs to the glucose-6-phosphate dehydrogenase family.

It carries out the reaction D-glucose 6-phosphate + NADP(+) = 6-phospho-D-glucono-1,5-lactone + NADPH + H(+). It functions in the pathway carbohydrate degradation; pentose phosphate pathway; D-ribulose 5-phosphate from D-glucose 6-phosphate (oxidative stage): step 1/3. Its function is as follows. Catalyzes the oxidation of glucose 6-phosphate to 6-phosphogluconolactone. This chain is Glucose-6-phosphate 1-dehydrogenase, found in Chlamydia trachomatis serovar D (strain ATCC VR-885 / DSM 19411 / UW-3/Cx).